We begin with the raw amino-acid sequence, 222 residues long: Peptidyl-prolyl cis-trans isomerase FKBP7 (222 aa).

The N-terminal stretch at 1 to 23 (MPKTMHFLFRFIVFFYLWGLFTA) is a signal peptide. Asparagine 45 carries an N-linked (GlcNAc...) asparagine glycan. Residues 53–145 (GDLLNAHYDG…IFEIELYAVT (93 aa)) enclose the PPIase FKBP-type domain. EF-hand domains are found at residues 145-180 (TKGP…EFEK) and 189-222 (YQDA…HDEL). Residues aspartate 158, aspartate 160, aspartate 162, glutamine 164, glutamate 169, aspartate 202, aspartate 204, aspartate 206, and glutamate 213 each contribute to the Ca(2+) site. Residues 200 to 222 (KNDHDGDGFISPKEYNVYQHDEL) form a disordered region. A Retention in the endoplasmic reticulum motif is present at residues 219 to 222 (HDEL).

In terms of processing, glycosylated.

It localises to the endoplasmic reticulum lumen. The catalysed reaction is [protein]-peptidylproline (omega=180) = [protein]-peptidylproline (omega=0). PPIases accelerate the folding of proteins during protein synthesis. This is Peptidyl-prolyl cis-trans isomerase FKBP7 (FKBP7) from Homo sapiens (Human).